Here is a 609-residue protein sequence, read N- to C-terminus: UvrABC system protein C (609 aa).

One can recognise a GIY-YIG domain in the interval 13 to 91; the sequence is HQPGVYRMFD…IKAFQPRYNV (79 aa). In terms of domain architecture, UVR spans 201 to 236; the sequence is QQVLEHLIKKMEQASMQLNFEQAAYFRDQIQAIRAV.

This sequence belongs to the UvrC family. In terms of assembly, interacts with UvrB in an incision complex.

The protein resides in the cytoplasm. Functionally, the UvrABC repair system catalyzes the recognition and processing of DNA lesions. UvrC both incises the 5' and 3' sides of the lesion. The N-terminal half is responsible for the 3' incision and the C-terminal half is responsible for the 5' incision. The protein is UvrABC system protein C of Histophilus somni (strain 2336) (Haemophilus somnus).